Reading from the N-terminus, the 396-residue chain is Elongation factor Tu (396 aa).

Residues 10-206 enclose the tr-type G domain; that stretch reads KPHVNVGTIG…ALDTYIPTPE (197 aa). A G1 region spans residues 19–26; it reads GHVDHGKT. GTP is bound at residue 19-26; that stretch reads GHVDHGKT. Thr-26 serves as a coordination point for Mg(2+). The segment at 60–64 is G2; the sequence is GITIN. The interval 81 to 84 is G3; the sequence is DCPG. GTP contacts are provided by residues 81 to 85 and 136 to 139; these read DCPGH and NKCD. The G4 stretch occupies residues 136–139; that stretch reads NKCD. The G5 stretch occupies residues 174 to 176; that stretch reads SAK.

The protein belongs to the TRAFAC class translation factor GTPase superfamily. Classic translation factor GTPase family. EF-Tu/EF-1A subfamily. Monomer.

The protein localises to the cytoplasm. The catalysed reaction is GTP + H2O = GDP + phosphate + H(+). GTP hydrolase that promotes the GTP-dependent binding of aminoacyl-tRNA to the A-site of ribosomes during protein biosynthesis. This is Elongation factor Tu from Burkholderia mallei (strain NCTC 10247).